Consider the following 89-residue polypeptide: Small ribosomal subunit protein uS15 (89 aa).

It belongs to the universal ribosomal protein uS15 family. Part of the 30S ribosomal subunit. Forms a bridge to the 50S subunit in the 70S ribosome, contacting the 23S rRNA.

One of the primary rRNA binding proteins, it binds directly to 16S rRNA where it helps nucleate assembly of the platform of the 30S subunit by binding and bridging several RNA helices of the 16S rRNA. Functionally, forms an intersubunit bridge (bridge B4) with the 23S rRNA of the 50S subunit in the ribosome. The polypeptide is Small ribosomal subunit protein uS15 (Beutenbergia cavernae (strain ATCC BAA-8 / DSM 12333 / CCUG 43141 / JCM 11478 / NBRC 16432 / NCIMB 13614 / HKI 0122)).